Here is a 506-residue protein sequence, read N- to C-terminus: Protein CYCLOPS (506 aa).

Disordered stretches follow at residues 193 to 223 (TVNSAPMSNTPSQTPTFVSPSSSSTSPLDNP) and 385 to 434 (KENL…RSST). The segment covering 202-219 (TPSQTPTFVSPSSSSTSP) has biased composition (low complexity). Residues 385 to 394 (KENLKDDRKK) show a composition bias toward basic and acidic residues. The Nuclear localization signal signature appears at 415-418 (KKRR). Residues 422-432 (SRKMAEAKERS) are compositionally biased toward basic and acidic residues. Residues 441–506 (IQVVLKRCET…IERIVSDTNT (66 aa)) adopt a coiled-coil conformation.

The protein belongs to the CYCLOPS family. Highly epressed in roots. Expressed at very low levels in leaves, stems and panicles.

The protein localises to the nucleus. Its function is as follows. Involved in arbuscular mycorrhizal (AM) symbiosis. Required for fungal infection in roots and arbuscule development during AM symbiosis. The sequence is that of Protein CYCLOPS from Oryza sativa subsp. japonica (Rice).